Consider the following 220-residue polypeptide: MKKIQIAIDGPASSGKSTVAKIIARNLGLIYLDTGAMYRVATLVALQEKTEDASKIIQFIENHPISFANGKNGQEVLVGLDNVTEVIRTNEVTNAVSKISAMMEIREFMVAEQQRIAQKGGIIMDGRDIGTVVLPQANLKIFLVASVDERAERRYKENLSKGIPTDLDRLKVEIAERDRKDSTRAVSPLKQAEDAILLDSTGKTIKEIVQFIEEKAKKLM.

Residue G10–T18 coordinates ATP.

This sequence belongs to the cytidylate kinase family. Type 1 subfamily.

The protein localises to the cytoplasm. The catalysed reaction is CMP + ATP = CDP + ADP. The enzyme catalyses dCMP + ATP = dCDP + ADP. The protein is Cytidylate kinase of Lactococcus lactis subsp. cremoris (strain MG1363).